The primary structure comprises 247 residues: 1-(5-phosphoribosyl)-5-[(5-phosphoribosylamino)methylideneamino] imidazole-4-carboxamide isomerase (247 aa).

D8 acts as the Proton acceptor in catalysis. Residue D129 is the Proton donor of the active site.

Belongs to the HisA/HisF family.

The protein localises to the cytoplasm. It catalyses the reaction 1-(5-phospho-beta-D-ribosyl)-5-[(5-phospho-beta-D-ribosylamino)methylideneamino]imidazole-4-carboxamide = 5-[(5-phospho-1-deoxy-D-ribulos-1-ylimino)methylamino]-1-(5-phospho-beta-D-ribosyl)imidazole-4-carboxamide. Its pathway is amino-acid biosynthesis; L-histidine biosynthesis; L-histidine from 5-phospho-alpha-D-ribose 1-diphosphate: step 4/9. The chain is 1-(5-phosphoribosyl)-5-[(5-phosphoribosylamino)methylideneamino] imidazole-4-carboxamide isomerase from Solidesulfovibrio magneticus (strain ATCC 700980 / DSM 13731 / RS-1) (Desulfovibrio magneticus).